Consider the following 546-residue polypeptide: Chaperonin GroEL (546 aa).

ATP contacts are provided by residues 30 to 33, Lys51, 87 to 91, Gly415, 479 to 481, and Asp495; these read TLGP, DGTTT, and NAA.

Belongs to the chaperonin (HSP60) family. In terms of assembly, forms a cylinder of 14 subunits composed of two heptameric rings stacked back-to-back. Interacts with the co-chaperonin GroES.

It localises to the cytoplasm. It carries out the reaction ATP + H2O + a folded polypeptide = ADP + phosphate + an unfolded polypeptide.. Together with its co-chaperonin GroES, plays an essential role in assisting protein folding. The GroEL-GroES system forms a nano-cage that allows encapsulation of the non-native substrate proteins and provides a physical environment optimized to promote and accelerate protein folding. This Pseudomonas putida (strain W619) protein is Chaperonin GroEL.